Reading from the N-terminus, the 388-residue chain is Large ribosomal subunit protein uL3A (388 aa).

A compositionally biased stretch (basic and acidic residues) spans 1 to 10; that stretch reads MSHCKFEQPR. Residues 1-34 form a disordered region; it reads MSHCKFEQPRHGSLGFLPRKRASRQRGKVKAFPK. Ser-13 carries the post-translational modification Phosphoserine. Over residues 18-31 the composition is skewed to basic residues; sequence PRKRASRQRGKVKA. Ser-65, Ser-140, Ser-143, Ser-207, Ser-295, and Ser-355 each carry phosphoserine. A Phosphothreonine modification is found at Thr-372.

This sequence belongs to the universal ribosomal protein uL3 family. Component of the large ribosomal subunit (LSU). Mature yeast ribosomes consist of a small (40S) and a large (60S) subunit. The 40S small subunit contains 1 molecule of ribosomal RNA (18S rRNA) and at least 33 different proteins. The large 60S subunit contains 3 rRNA molecules (25S, 5.8S and 5S rRNA) and at least 46 different proteins. uL3 forms together with ES39L one of the contact sites for the signal recognition particle that targets ribosomes to the endoplasmic reticulum membrane.

Its subcellular location is the cytoplasm. Functionally, component of the ribosome, a large ribonucleoprotein complex responsible for the synthesis of proteins in the cell. The small ribosomal subunit (SSU) binds messenger RNAs (mRNAs) and translates the encoded message by selecting cognate aminoacyl-transfer RNA (tRNA) molecules. The large subunit (LSU) contains the ribosomal catalytic site termed the peptidyl transferase center (PTC), which catalyzes the formation of peptide bonds, thereby polymerizing the amino acids delivered by tRNAs into a polypeptide chain. The nascent polypeptides leave the ribosome through a tunnel in the LSU and interact with protein factors that function in enzymatic processing, targeting, and the membrane insertion of nascent chains at the exit of the ribosomal tunnel. uL3 plays a role in coordinating processes of accommodating the aminoacyl-tRNA in the PTC. This is Large ribosomal subunit protein uL3A (rpl301) from Schizosaccharomyces pombe (strain 972 / ATCC 24843) (Fission yeast).